The primary structure comprises 386 residues: Diaminopimelate decarboxylase (386 aa).

An N6-(pyridoxal phosphate)lysine modification is found at lysine 49. Residues glycine 228 and 266-269 (ELGR) contribute to the pyridoxal 5'-phosphate site. Residues arginine 269, arginine 305, tyrosine 309, glutamate 335, and tyrosine 363 each coordinate substrate. Tyrosine 363 is a pyridoxal 5'-phosphate binding site.

Belongs to the Orn/Lys/Arg decarboxylase class-II family. LysA subfamily. As to quaternary structure, homodimer. Pyridoxal 5'-phosphate serves as cofactor.

The enzyme catalyses meso-2,6-diaminopimelate + H(+) = L-lysine + CO2. The protein operates within amino-acid biosynthesis; L-lysine biosynthesis via DAP pathway; L-lysine from DL-2,6-diaminopimelate: step 1/1. Functionally, specifically catalyzes the decarboxylation of meso-diaminopimelate (meso-DAP) to L-lysine. The protein is Diaminopimelate decarboxylase of Bacteroides thetaiotaomicron (strain ATCC 29148 / DSM 2079 / JCM 5827 / CCUG 10774 / NCTC 10582 / VPI-5482 / E50).